Consider the following 536-residue polypeptide: Probable serine/threonine-protein kinase DDB_G0268550 (536 aa).

The Protein kinase domain occupies 14-305 (EIIEKNYRKG…IDVLEIHPFL (292 aa)). Residues 20 to 28 (YRKGGFSKI) and lysine 51 each bind ATP. Aspartate 147 serves as the catalytic Proton acceptor. The disordered stretch occupies residues 161 to 192 (DNNNNNNNNNNNNNNNNNNNSNINDDNNNSNS).

Belongs to the protein kinase superfamily. Ser/Thr protein kinase family. It depends on Mg(2+) as a cofactor.

The catalysed reaction is L-seryl-[protein] + ATP = O-phospho-L-seryl-[protein] + ADP + H(+). The enzyme catalyses L-threonyl-[protein] + ATP = O-phospho-L-threonyl-[protein] + ADP + H(+). The protein is Probable serine/threonine-protein kinase DDB_G0268550 of Dictyostelium discoideum (Social amoeba).